A 454-amino-acid polypeptide reads, in one-letter code: Bifunctional protein GlmU (454 aa).

Residues 1–226 (MALNVVILAA…AIEVEGANNR (226 aa)) form a pyrophosphorylase region. UDP-N-acetyl-alpha-D-glucosamine-binding positions include 8-11 (LAAG), Lys-22, Gln-73, 78-79 (GT), 100-102 (YGD), Gly-137, Glu-151, Asn-166, and Asn-224. Asp-102 contacts Mg(2+). Mg(2+) is bound at residue Asn-224. Residues 227-247 (VQLAQLERAYQARAAEKLMLE) form a linker region. Residues 248–454 (GANLRDPARI…GWTRPVKQKK (207 aa)) form an N-acetyltransferase region. UDP-N-acetyl-alpha-D-glucosamine-binding residues include Arg-330 and Lys-348. Catalysis depends on His-360, which acts as the Proton acceptor. The UDP-N-acetyl-alpha-D-glucosamine site is built by Tyr-363 and Asn-374. Acetyl-CoA contacts are provided by residues Ala-377, 383–384 (NY), Ser-402, Ala-420, and Arg-437.

In the N-terminal section; belongs to the N-acetylglucosamine-1-phosphate uridyltransferase family. This sequence in the C-terminal section; belongs to the transferase hexapeptide repeat family. As to quaternary structure, homotrimer. Mg(2+) is required as a cofactor.

Its subcellular location is the cytoplasm. It carries out the reaction alpha-D-glucosamine 1-phosphate + acetyl-CoA = N-acetyl-alpha-D-glucosamine 1-phosphate + CoA + H(+). The enzyme catalyses N-acetyl-alpha-D-glucosamine 1-phosphate + UTP + H(+) = UDP-N-acetyl-alpha-D-glucosamine + diphosphate. The protein operates within nucleotide-sugar biosynthesis; UDP-N-acetyl-alpha-D-glucosamine biosynthesis; N-acetyl-alpha-D-glucosamine 1-phosphate from alpha-D-glucosamine 6-phosphate (route II): step 2/2. Its pathway is nucleotide-sugar biosynthesis; UDP-N-acetyl-alpha-D-glucosamine biosynthesis; UDP-N-acetyl-alpha-D-glucosamine from N-acetyl-alpha-D-glucosamine 1-phosphate: step 1/1. It participates in bacterial outer membrane biogenesis; LPS lipid A biosynthesis. Functionally, catalyzes the last two sequential reactions in the de novo biosynthetic pathway for UDP-N-acetylglucosamine (UDP-GlcNAc). The C-terminal domain catalyzes the transfer of acetyl group from acetyl coenzyme A to glucosamine-1-phosphate (GlcN-1-P) to produce N-acetylglucosamine-1-phosphate (GlcNAc-1-P), which is converted into UDP-GlcNAc by the transfer of uridine 5-monophosphate (from uridine 5-triphosphate), a reaction catalyzed by the N-terminal domain. This chain is Bifunctional protein GlmU, found in Shewanella loihica (strain ATCC BAA-1088 / PV-4).